The sequence spans 387 residues: Acyltransferase MdmB (387 aa).

The next 10 membrane-spanning stretches (helical) occupy residues 8-28 (LPSL…CHIA), 45-65 (ITTL…FVLA), 85-105 (IYPL…SLAE), 139-161 (TPSW…YRLV), 170-190 (WWCA…TSQF), 209-229 (CWLP…ALIL), 236-256 (GPGV…TQVV), 258-278 (PMFT…TALA), 292-312 (AVLV…FMVI), and 336-356 (ALAL…HTVV).

This sequence belongs to the acyltransferase 3 family.

The protein localises to the cell membrane. Functionally, catalyzes the acylation of the mycaminose sugar during midecamycin biosynthesis. The sequence is that of Acyltransferase MdmB (mdmB) from Streptomyces mycarofaciens.